A 301-amino-acid polypeptide reads, in one-letter code: Zinc finger protein LEE1 (301 aa).

Positions 1-25 (MDAFENMSVSNHPGGNARRNSQSAN) are disordered. The span at 7 to 25 (MSVSNHPGGNARRNSQSAN) shows a compositional bias: polar residues. A phosphoserine mark is found at S21 and S30. 2 C3H1-type zinc fingers span residues 87 to 114 (DYSH…HSPD) and 123 to 145 (PCKY…HVLP). S282 carries the post-translational modification Phosphoserine.

The polypeptide is Zinc finger protein LEE1 (LEE1) (Saccharomyces cerevisiae (strain ATCC 204508 / S288c) (Baker's yeast)).